The sequence spans 213 residues: uncharacterized protein (213 aa).

3 residues coordinate S-adenosyl-L-methionine: glycine 53, glutamate 74, and aspartate 97.

It belongs to the methyltransferase superfamily. YrrT family.

Could be a S-adenosyl-L-methionine-dependent methyltransferase. This is an uncharacterized protein from Bacillus subtilis (strain 168).